The sequence spans 505 residues: Peroxisome proliferator-activated receptor gamma (505 aa).

Positions 1–26 (MGETLGDSLIDPESDSFADTLSASTS) are disordered. Residues 17-26 (FADTLSASTS) show a composition bias toward polar residues. Ser-112 is modified (phosphoserine; by MAPK). The segment at residues 136–210 (AIECRVCGDK…VGMSHNAIRF (75 aa)) is a DNA-binding region (nuclear receptor). 2 NR C4-type zinc fingers span residues 139 to 159 (CRVC…CEGC) and 176 to 198 (CDLN…FQKC). Positions 205–280 (HNAIRFGRMP…DKSPFVIYDM (76 aa)) are interaction with FAM120B. The 266-residue stretch at 238–503 (DLRALAKHLY…HPLLQEIYKD (266 aa)) folds into the NR LBD domain. Residue Lys-252 forms a Glycyl lysine isopeptide (Lys-Gly) (interchain with G-Cter in ubiquitin) linkage. Positions 495-503 (PLLQEIYKD) match the 9aaTAD motif.

Belongs to the nuclear hormone receptor family. NR1 subfamily. In terms of assembly, interacts with FOXO1 (acetylated form). Heterodimer with other nuclear receptors, such as RXRA. The heterodimer with the retinoic acid receptor RXRA is called adipocyte-specific transcription factor ARF6. Interacts with NCOA6 coactivator, leading to a strong increase in transcription of target genes. Interacts with coactivator PPARBP, leading to a mild increase in transcription of target genes. Interacts with NOCA7 in a ligand-inducible manner. Interacts with NCOA1 and NCOA2 LXXLL motifs. Interacts with ASXL1, ASXL2, DNTTIP2, FAM120B, MAP2K1/MEK1, NR0B2, PDPK1, PRDM16, PRMT2 and TGFB1I1. Interacts (when activated by agonist) with PPP5C. Interacts with HELZ2 and THRAP3; the interaction stimulates the transcriptional activity of PPARG. Interacts with PER2, the interaction is ligand dependent and blocks PPARG recruitment to target promoters. Interacts with NOCT. Interacts with ACTN4. Interacts (when in the liganded conformation) with GPS2. Interacts with CRY1 and CRY2 in a ligand-dependent manner. In the absence of hormonal ligand, interacts with TACC1. In macrophages, interacts with PAQR3 and STUB1; the interactions promote PPARG poylubiquitination and STUB1-mediated degradation. Phosphorylated at basal conditions and dephosphorylated when treated with the ligand. May be dephosphorylated by PPP5C. The phosphorylated form may be inactive and dephosphorylation induces adipogenic activity. Post-translationally, ubiquitinated by E3 ubiquitin-protein ligase complex containing FBXO9; leading to proteasomal degradation. Ubiquitinated at Lys-252 by TRIM55 leading to proteasomal degradation. Ubiquitinated by E3 ubiquitin-protein ligase STUB1/CHIP; leading to proteasomal degradation.

It localises to the nucleus. The protein localises to the cytoplasm. PDPK1 activates its transcriptional activity independently of its kinase activity. In terms of biological role, nuclear receptor that binds peroxisome proliferators such as hypolipidemic drugs and fatty acids. Once activated by a ligand, the nuclear receptor binds to DNA specific PPAR response elements (PPRE) and modulates the transcription of its target genes, such as acyl-CoA oxidase. It therefore controls the peroxisomal beta-oxidation pathway of fatty acids. Key regulator of adipocyte differentiation and glucose homeostasis. ARF6 acts as a key regulator of the tissue-specific adipocyte P2 (aP2) enhancer. Acts as a critical regulator of gut homeostasis by suppressing NF-kappa-B-mediated pro-inflammatory responses. Plays a role in the regulation of cardiovascular circadian rhythms by regulating the transcription of BMAL1 in the blood vessels. This chain is Peroxisome proliferator-activated receptor gamma (PPARG), found in Canis lupus familiaris (Dog).